A 182-amino-acid polypeptide reads, in one-letter code: MLISHSDLNQQLKSAGIGFNATELHGFLSGLLCGGLKDQSWLPLLYQFSNDNHAYPTGLVQPVTELYEKISQTLSDVEGFTFELGLTEDENVFAQADSLSDWANQFLLGLGLAQPKLAKEKGEIGEAVDDLQDICQLGYDEDDNEEELAEALEEIIEYVRTIAMLFYSHFNEEEIESKPVLH.

It belongs to the UPF0149 family.

This is UPF0149 protein CGSHiGG_07585 from Haemophilus influenzae (strain PittGG).